The primary structure comprises 189 residues: Sec-independent protein translocase protein TatB (189 aa).

Residues methionine 1–glycine 21 traverse the membrane as a helical segment. The segment at threonine 152–serine 189 is disordered. Polar residues predominate over residues glutamine 153–serine 189.

Belongs to the TatB family. The Tat system comprises two distinct complexes: a TatABC complex, containing multiple copies of TatA, TatB and TatC subunits, and a separate TatA complex, containing only TatA subunits. Substrates initially bind to the TatABC complex, which probably triggers association of the separate TatA complex to form the active translocon.

Its subcellular location is the cell inner membrane. In terms of biological role, part of the twin-arginine translocation (Tat) system that transports large folded proteins containing a characteristic twin-arginine motif in their signal peptide across membranes. Together with TatC, TatB is part of a receptor directly interacting with Tat signal peptides. TatB may form an oligomeric binding site that transiently accommodates folded Tat precursor proteins before their translocation. The protein is Sec-independent protein translocase protein TatB of Helicobacter hepaticus (strain ATCC 51449 / 3B1).